Reading from the N-terminus, the 154-residue chain is Superoxide dismutase [Cu-Zn] (154 aa).

Positions 47, 49, and 64 each coordinate Cu cation. Cys58 and Cys147 are oxidised to a cystine. Positions 64, 72, 81, and 84 each coordinate Zn(2+). Residue His121 coordinates Cu cation. Arg144 serves as a coordination point for substrate.

The protein belongs to the Cu-Zn superoxide dismutase family. As to quaternary structure, homodimer. Cu cation is required as a cofactor. It depends on Zn(2+) as a cofactor.

It localises to the cytoplasm. It carries out the reaction 2 superoxide + 2 H(+) = H2O2 + O2. In terms of biological role, destroys radicals which are normally produced within the cells and which are toxic to biological systems. This Eremothecium gossypii (strain ATCC 10895 / CBS 109.51 / FGSC 9923 / NRRL Y-1056) (Yeast) protein is Superoxide dismutase [Cu-Zn] (SOD1).